The following is an 831-amino-acid chain: Translation initiation factor IF-2 (831 aa).

The interval 116-157 is disordered; that stretch reads IEPLETDKEVEQKQQNTEENKVEVSAKIVQDDEDIPSQIPKK. Over residues 117 to 139 the composition is skewed to basic and acidic residues; it reads EPLETDKEVEQKQQNTEENKVEV. The tr-type G domain maps to 329–499; sequence TRAPVVTVMG…LLIAEMQDLK (171 aa). The G1 stretch occupies residues 338 to 345; the sequence is GHVDHGKT. Residue 338–345 coordinates GTP; sequence GHVDHGKT. Residues 363–367 form a G2 region; it reads GITQH. Residues 385–388 form a G3 region; that stretch reads DTPG. GTP is bound by residues 385–389 and 439–442; these read DTPGH and NKID. Residues 439–442 are G4; that stretch reads NKID. Positions 475 to 477 are G5; the sequence is SAL.

It belongs to the TRAFAC class translation factor GTPase superfamily. Classic translation factor GTPase family. IF-2 subfamily.

It localises to the cytoplasm. One of the essential components for the initiation of protein synthesis. Protects formylmethionyl-tRNA from spontaneous hydrolysis and promotes its binding to the 30S ribosomal subunits. Also involved in the hydrolysis of GTP during the formation of the 70S ribosomal complex. This Rickettsia conorii (strain ATCC VR-613 / Malish 7) protein is Translation initiation factor IF-2.